The following is a 190-amino-acid chain: MNNNLQGDAIAAAIDVLNEERVIAYPTEAVFGVGCDPDSETAVMRLLELKRRPVDKGLILIAANYEQLKPYIDDTMLTDAQRETIFSRWPGPVTFVFPAPATTPRWLTGRFDSLAVRVTDHPLVVALCQAYGKPLVSTSANLSGLPPCRTVDEVRAQFGAAFPVVPGETGGRLNPSEIRDALTGELFRQG.

The region spanning 7–190 (GDAIAAAIDV…ALTGELFRQG (184 aa)) is the YrdC-like domain.

Belongs to the SUA5 family. TsaC subfamily.

It localises to the cytoplasm. The catalysed reaction is L-threonine + hydrogencarbonate + ATP = L-threonylcarbamoyladenylate + diphosphate + H2O. In terms of biological role, required for the formation of a threonylcarbamoyl group on adenosine at position 37 (t(6)A37) in tRNAs that read codons beginning with adenine. Catalyzes the conversion of L-threonine, HCO(3)(-)/CO(2) and ATP to give threonylcarbamoyl-AMP (TC-AMP) as the acyladenylate intermediate, with the release of diphosphate. This is Threonylcarbamoyl-AMP synthase from Escherichia coli O6:H1 (strain CFT073 / ATCC 700928 / UPEC).